The following is a 358-amino-acid chain: DNA primase large subunit PriL (358 aa).

Residues cysteine 234, cysteine 306, cysteine 315, and cysteine 322 each coordinate [4Fe-4S] cluster. The disordered stretch occupies residues 335–358; it reads KLDDTDEEELVDWREDEGEEEADA. Acidic residues predominate over residues 338–358; sequence DTDEEELVDWREDEGEEEADA.

Belongs to the eukaryotic-type primase large subunit family. Heterodimer of a small subunit (PriS) and a large subunit (PriL). Requires [4Fe-4S] cluster as cofactor.

Its function is as follows. Regulatory subunit of DNA primase, an RNA polymerase that catalyzes the synthesis of short RNA molecules used as primers for DNA polymerase during DNA replication. Stabilizes and modulates the activity of the small subunit, increasing the rate of DNA synthesis, and conferring RNA synthesis capability. The DNA polymerase activity may enable DNA primase to also catalyze primer extension after primer synthesis. May also play a role in DNA repair. This Haloarcula marismortui (strain ATCC 43049 / DSM 3752 / JCM 8966 / VKM B-1809) (Halobacterium marismortui) protein is DNA primase large subunit PriL.